A 467-amino-acid polypeptide reads, in one-letter code: MLDFLDYIQFAFSDASKWNRDNSYSQLTMTANALLDFSTPERLKVNLSSLSTPHFATTYTLGTVGLIDGSISYLFTTVPLRDTPSRGTLIPLRKLVPGYRQISAPSLPPGLPTVDGRDGDLAIGDTQGILKKKPTLLHATLHLPPPTTLTGLFLRRLSPTTQLSLAFCSSRASTPKSAPQAALVTQILHDTGKYSSEFLFSTDNALFGFKGLWNFGPDPRKQNQQGDPARESCRPLLSLLSAGAEAYYSPVSSVVGLSTGLRFTTLPAATESPHFTFPYTLTLTLTPLTGSMSTTYSLLASPNVSFSSRFGFNVYSWESEMVAGCELWRRSSNNRLHDDKSQRDSPLFAVDDLTWARRKMGLPDTAPSRNRECDDLPPPRRDNYHHQRSPHASDSVIKVRVDQSWNIRALWEGRVKELLVSAGVALGPTPRSSLSYASSSAAGGVGAAGGLSSYGWKSVGVSVLYSS.

Residues 361-393 form a disordered region; it reads GLPDTAPSRNRECDDLPPPRRDNYHHQRSPHAS. Residues 369–385 show a composition bias toward basic and acidic residues; sequence RNRECDDLPPPRRDNYH.

The protein belongs to the MDM10 family. As to quaternary structure, component of the ER-mitochondria encounter structure (ERMES) or MDM complex, composed of MMM1, MDM10, MDM12 and MDM34. Associates with the mitochondrial outer membrane sorting assembly machinery SAM(core) complex.

Its subcellular location is the mitochondrion outer membrane. Component of the ERMES/MDM complex, which serves as a molecular tether to connect the endoplasmic reticulum and mitochondria. Components of this complex are involved in the control of mitochondrial shape and protein biogenesis and may function in phospholipid exchange. MDM10 is involved in the late assembly steps of the general translocase of the mitochondrial outer membrane (TOM complex). Functions in the TOM40-specific route of the assembly of outer membrane beta-barrel proteins, including the association of TOM40 with the receptor TOM22 and small TOM proteins. Can associate with the SAM(core) complex as well as the MDM12-MMM1 complex, both involved in late steps of the major beta-barrel assembly pathway, that is responsible for biogenesis of all outer membrane beta-barrel proteins. May act as a switch that shuttles between both complexes and channels precursor proteins into the TOM40-specific pathway. Plays a role in mitochondrial morphology and in the inheritance of mitochondria. This Ajellomyces capsulatus (strain NAm1 / WU24) (Darling's disease fungus) protein is Mitochondrial distribution and morphology protein 10.